Reading from the N-terminus, the 85-residue chain is Dr hemagglutinin AFA-III operon regulatory protein AfaF (85 aa).

To E.coli PapI and DaaF.

In terms of biological role, may have a possible regulatory function on the expression of the other AFA-III genes. In Escherichia coli, this protein is Dr hemagglutinin AFA-III operon regulatory protein AfaF (afaF).